The sequence spans 143 residues: Transmembrane protein 80 (143 aa).

4 helical membrane-spanning segments follow: residues 22-42 (LLCL…LLLV), 47-67 (VFTY…LMGI), 88-108 (LAAS…FLLW), and 122-142 (PLLA…AAFV).

The protein localises to the membrane. It is found in the cell projection. The protein resides in the cilium. This is Transmembrane protein 80 (TMEM80) from Bos taurus (Bovine).